A 258-amino-acid chain; its full sequence is Imidazole glycerol phosphate synthase subunit HisF (258 aa).

Residues D11 and D130 contribute to the active site.

The protein belongs to the HisA/HisF family. As to quaternary structure, heterodimer of HisH and HisF.

The protein localises to the cytoplasm. It catalyses the reaction 5-[(5-phospho-1-deoxy-D-ribulos-1-ylimino)methylamino]-1-(5-phospho-beta-D-ribosyl)imidazole-4-carboxamide + L-glutamine = D-erythro-1-(imidazol-4-yl)glycerol 3-phosphate + 5-amino-1-(5-phospho-beta-D-ribosyl)imidazole-4-carboxamide + L-glutamate + H(+). It functions in the pathway amino-acid biosynthesis; L-histidine biosynthesis; L-histidine from 5-phospho-alpha-D-ribose 1-diphosphate: step 5/9. In terms of biological role, IGPS catalyzes the conversion of PRFAR and glutamine to IGP, AICAR and glutamate. The HisF subunit catalyzes the cyclization activity that produces IGP and AICAR from PRFAR using the ammonia provided by the HisH subunit. This Methylobacterium sp. (strain 4-46) protein is Imidazole glycerol phosphate synthase subunit HisF.